Reading from the N-terminus, the 84-residue chain is Delta-thalatoxin-Tas1a (84 aa).

The first 19 residues, 1–19, serve as a signal peptide directing secretion; that stretch reads MAYLKIVLVALMLVLAVSA. Positions 20–33 are excised as a propeptide; that stretch reads MRRPDQQDQDISVA. 3 disulfides stabilise this stretch: Cys-38–Cys-78, Cys-40–Cys-68, and Cys-61–Cys-79.

This sequence belongs to the sea anemone sodium channel inhibitory toxin family. Type II subfamily.

Its subcellular location is the secreted. The protein localises to the nematocyst. In terms of biological role, binds specifically to the voltage-gated sodium channel (Nav) and delays its inactivation. The sequence is that of Delta-thalatoxin-Tas1a from Thalassianthus aster (Fuzzy-tipped anemone).